The sequence spans 205 residues: High frequency lysogenization protein HflD homolog (205 aa).

Belongs to the HflD family.

It is found in the cytoplasm. The protein resides in the cell inner membrane. This Shewanella sp. (strain MR-4) protein is High frequency lysogenization protein HflD homolog.